Here is a 177-residue protein sequence, read N- to C-terminus: Large ribosomal subunit protein uL6 (177 aa).

This sequence belongs to the universal ribosomal protein uL6 family. In terms of assembly, part of the 50S ribosomal subunit.

This protein binds to the 23S rRNA, and is important in its secondary structure. It is located near the subunit interface in the base of the L7/L12 stalk, and near the tRNA binding site of the peptidyltransferase center. This chain is Large ribosomal subunit protein uL6, found in Rickettsia typhi (strain ATCC VR-144 / Wilmington).